The chain runs to 254 residues: 4-hydroxy-tetrahydrodipicolinate reductase (254 aa).

Residues 8–13 (GGSGRV), 87–89 (GTT), and 111–114 (ATNM) each bind NAD(+). The active-site Proton donor/acceptor is the H143. Residue H144 participates in (S)-2,3,4,5-tetrahydrodipicolinate binding. Residue K147 is the Proton donor of the active site. A (S)-2,3,4,5-tetrahydrodipicolinate-binding site is contributed by 153–154 (GT).

The protein belongs to the DapB family.

It is found in the cytoplasm. It carries out the reaction (S)-2,3,4,5-tetrahydrodipicolinate + NAD(+) + H2O = (2S,4S)-4-hydroxy-2,3,4,5-tetrahydrodipicolinate + NADH + H(+). The enzyme catalyses (S)-2,3,4,5-tetrahydrodipicolinate + NADP(+) + H2O = (2S,4S)-4-hydroxy-2,3,4,5-tetrahydrodipicolinate + NADPH + H(+). Its pathway is amino-acid biosynthesis; L-lysine biosynthesis via DAP pathway; (S)-tetrahydrodipicolinate from L-aspartate: step 4/4. Functionally, catalyzes the conversion of 4-hydroxy-tetrahydrodipicolinate (HTPA) to tetrahydrodipicolinate. The polypeptide is 4-hydroxy-tetrahydrodipicolinate reductase (Nitratiruptor sp. (strain SB155-2)).